Consider the following 203-residue polypeptide: MDRVVIVLSVLSVAASSQSILDQRRFSIAVSRVQHIHLLAQKYFSDFESSLQTEDQRQVNKIFLQDFCNSDDIISPIDKHDTQRSSVLKLLSISVRLIESWEFSSRFVTWSTFPRNQISHKLSELKTGIRMLIEANQDGAEVFSDSSTFQLAPYGNFYQSLGGDESLRRNYELLACFKKDMHKVETYLTVAKCRLSPEANCTL.

Residues 1-17 (MDRVVIVLSVLSVAASS) form the signal peptide. Glutamine 18 is modified (pyrrolidone carboxylic acid). Histidine 35 contributes to the Zn(2+) binding site. Cysteine 68 and cysteine 176 are joined by a disulfide. Residue glutamate 185 participates in Zn(2+) binding. Cysteine 193 and cysteine 201 are disulfide-bonded.

The protein belongs to the somatotropin/prolactin family.

It localises to the secreted. In terms of biological role, growth hormone plays an important role in growth control and is involved in the regulation of several anabolic processes. Implicated as an osmoregulatory substance important for seawater adaptation. The sequence is that of Somatotropin (gh) from Solea senegalensis (Senegalese sole).